We begin with the raw amino-acid sequence, 317 residues long: Melanocyte-stimulating hormone receptor (317 aa).

The Extracellular portion of the chain corresponds to 1–37 (MPVLGSQRRLLGSLNCTPPATFPLTLAPNRTGPQCLE). Asn29 is a glycosylation site (N-linked (GlcNAc...) asparagine). A helical transmembrane segment spans residues 38–63 (VSIPDGLFLSLGLVSLVENVLVVAAI). The Cytoplasmic portion of the chain corresponds to 64-72 (AKNRNLHSP). Residues 73-93 (MYYFICCLAVSDLLVSVSNVL) traverse the membrane as a helical segment. Over 94–118 (ETAVMLLLEAGALAARAAVVQQLDN) the chain is Extracellular. A helical transmembrane segment spans residues 119-140 (VIDMLICGSMVSSLCFLGAIAV). The Cytoplasmic segment spans residues 141-163 (DRYISIFYALRYHSVVTLPRAWR). A helical transmembrane segment spans residues 164 to 183 (IIAAIWVASILTSLLFITYY). Topologically, residues 184 to 191 (NHTVVLLC) are extracellular. A helical membrane pass occupies residues 192-211 (LVGFFIAMLALMAVLYVHML). Residues 212 to 240 (ARACQHARGIARLQKRQRPIHQGFGLKGA) are Cytoplasmic-facing. The chain crosses the membrane as a helical span at residues 241 to 266 (ATLTILLGVFFLCWGPFFLHLSLIVL). Topologically, residues 267–279 (CPQHPTCGCIFKN) are extracellular. The helical transmembrane segment at 280-300 (FNLFLALIICNAIVDPLIYAF) threads the bilayer. The Cytoplasmic segment spans residues 301–317 (RSQELRKTLQEVLQCSW). The S-palmitoyl cysteine moiety is linked to residue Cys315.

It belongs to the G-protein coupled receptor 1 family. As to quaternary structure, interacts with MGRN1, but does not undergo MGRN1-mediated ubiquitination; this interaction competes with GNAS-binding and thus inhibits agonist-induced cAMP production. Interacts with OPN3; the interaction results in a decrease in MC1R-mediated cAMP signaling and ultimately a decrease in melanin production in melanocytes.

The protein resides in the cell membrane. Functionally, receptor for MSH (alpha, beta and gamma) and ACTH. The activity of this receptor is mediated by G proteins which activate adenylate cyclase. Mediates melanogenesis, the production of eumelanin (black/brown) and phaeomelanin (red/yellow), via regulation of cAMP signaling in melanocytes. This chain is Melanocyte-stimulating hormone receptor (MC1R), found in Capreolus capreolus (European roe deer).